Consider the following 456-residue polypeptide: Adenylosuccinate lyase (456 aa).

Residues 15–16, 90–92, and 122–123 contribute to the N(6)-(1,2-dicarboxyethyl)-AMP site; these read RY, NHD, and TS. His171 serves as the catalytic Proton donor/acceptor. Gln248 contacts N(6)-(1,2-dicarboxyethyl)-AMP. The active-site Proton donor/acceptor is the Ser296. N(6)-(1,2-dicarboxyethyl)-AMP-binding positions include Ser297, 302–304, Asn310, Arg336, and 341–345; these read KVN and STVLR.

The protein belongs to the lyase 1 family. Adenylosuccinate lyase subfamily. In terms of assembly, homotetramer.

It carries out the reaction N(6)-(1,2-dicarboxyethyl)-AMP = fumarate + AMP. The enzyme catalyses (2S)-2-[5-amino-1-(5-phospho-beta-D-ribosyl)imidazole-4-carboxamido]succinate = 5-amino-1-(5-phospho-beta-D-ribosyl)imidazole-4-carboxamide + fumarate. It catalyses the reaction (2S)-2-amino-2'-deoxyadenylo-succinate = dZMP + fumarate. Its pathway is purine metabolism; AMP biosynthesis via de novo pathway; AMP from IMP: step 2/2. It functions in the pathway purine metabolism; IMP biosynthesis via de novo pathway; 5-amino-1-(5-phospho-D-ribosyl)imidazole-4-carboxamide from 5-amino-1-(5-phospho-D-ribosyl)imidazole-4-carboxylate: step 2/2. The protein operates within purine metabolism. In terms of biological role, catalyzes two reactions in de novo purine nucleotide biosynthesis. Catalyzes the breakdown of 5-aminoimidazole- (N-succinylocarboxamide) ribotide (SAICAR or 2-[5-amino-1-(5-phospho-beta-D-ribosyl)imidazole-4-carboxamido]succinate) to 5-aminoimidazole-4-carboxamide ribotide (AICAR or 5-amino-1-(5-phospho-beta-D-ribosyl)imidazole-4-carboxamide) and fumarate, and of adenylosuccinate (ADS or N(6)-(1,2-dicarboxyethyl)-AMP) to adenosine monophosphate (AMP) and fumarate. Functionally, (Microbial infection) Catalyzes the conversion of 2-amino-2'-deoxyadenylo-succinate to dZMP and fumarate, when the bacterium is infected by a phage that produces the substrate of this reaction, a step in the synthesis of dZTP (2-amino-2'-deoxyadenosine 5'-triphosphate), which is a nucleotide then used by the phage as a DNA polymerase substrate. In Vibrio cholerae serotype O1 (strain ATCC 39541 / Classical Ogawa 395 / O395), this protein is Adenylosuccinate lyase.